The sequence spans 197 residues: Holliday junction branch migration complex subunit RuvA (197 aa).

The domain I stretch occupies residues 1–63 (MIEFIRGYVD…EDVLALYGFH (63 aa)). The domain II stretch occupies residues 64-142 (TRQERMLFAK…AIVPDAFPNL (79 aa)). The flexible linker stretch occupies residues 143 to 149 (FTEPLEE). A domain III region spans residues 149-197 (ETNALSEAIEALKALGYADKEIQKVVPMLRQERLSTEGYIKLALQKLLK).

The protein belongs to the RuvA family. In terms of assembly, homotetramer. Forms an RuvA(8)-RuvB(12)-Holliday junction (HJ) complex. HJ DNA is sandwiched between 2 RuvA tetramers; dsDNA enters through RuvA and exits via RuvB. An RuvB hexamer assembles on each DNA strand where it exits the tetramer. Each RuvB hexamer is contacted by two RuvA subunits (via domain III) on 2 adjacent RuvB subunits; this complex drives branch migration. In the full resolvosome a probable DNA-RuvA(4)-RuvB(12)-RuvC(2) complex forms which resolves the HJ.

It localises to the cytoplasm. Functionally, the RuvA-RuvB-RuvC complex processes Holliday junction (HJ) DNA during genetic recombination and DNA repair, while the RuvA-RuvB complex plays an important role in the rescue of blocked DNA replication forks via replication fork reversal (RFR). RuvA specifically binds to HJ cruciform DNA, conferring on it an open structure. The RuvB hexamer acts as an ATP-dependent pump, pulling dsDNA into and through the RuvAB complex. HJ branch migration allows RuvC to scan DNA until it finds its consensus sequence, where it cleaves and resolves the cruciform DNA. The chain is Holliday junction branch migration complex subunit RuvA from Anoxybacillus flavithermus (strain DSM 21510 / WK1).